The primary structure comprises 500 residues: Prostacyclin synthase (500 aa).

Residues 1-20 (MSWAVVFGLLAALLLLLLLT) form a helical membrane-spanning segment. Residues R106, L112, N287, 358 to 359 (TR), and R382 contribute to the substrate site. Residue C441 participates in heme binding.

The protein belongs to the cytochrome P450 family. Requires heme as cofactor.

It localises to the endoplasmic reticulum membrane. It catalyses the reaction prostaglandin H2 = prostaglandin I2. The enzyme catalyses a hydroperoxyeicosatetraenoate = an oxoeicosatetraenoate + H2O. It carries out the reaction (15S)-hydroperoxy-(5Z,8Z,11Z,13E)-eicosatetraenoate = 15-oxo-(5Z,8Z,11Z,13E)-eicosatetraenoate + H2O. The catalysed reaction is (15S)-hydroperoxy-(5Z,8Z,11Z,13E)-eicosatetraenoate + AH2 = (15S)-hydroxy-(5Z,8Z,11Z,13E)-eicosatetraenoate + A + H2O. Its function is as follows. Catalyzes the biosynthesis and metabolism of eicosanoids. Catalyzes the isomerization of prostaglandin H2 to prostacyclin (= prostaglandin I2), a potent mediator of vasodilation and inhibitor of platelet aggregation. Additionally, displays dehydratase activity, toward hydroperoxyeicosatetraenoates (HPETEs), especially toward (15S)-hydroperoxy-(5Z,8Z,11Z,13E)-eicosatetraenoate (15(S)-HPETE). This chain is Prostacyclin synthase (PTGIS), found in Bos taurus (Bovine).